Reading from the N-terminus, the 438-residue chain is Trigger factor (438 aa).

The region spanning 162–247 (GDIVTIDFEG…VKDIKVKELP (86 aa)) is the PPIase FKBP-type domain.

The protein belongs to the FKBP-type PPIase family. Tig subfamily.

Its subcellular location is the cytoplasm. It catalyses the reaction [protein]-peptidylproline (omega=180) = [protein]-peptidylproline (omega=0). Involved in protein export. Acts as a chaperone by maintaining the newly synthesized protein in an open conformation. Functions as a peptidyl-prolyl cis-trans isomerase. The chain is Trigger factor from Caldicellulosiruptor bescii (strain ATCC BAA-1888 / DSM 6725 / KCTC 15123 / Z-1320) (Anaerocellum thermophilum).